A 546-amino-acid polypeptide reads, in one-letter code: Chaperonin GroEL (546 aa).

ATP is bound by residues Thr30–Pro33, Lys51, Asp87–Thr91, Gly415, Asn479–Ala481, and Asp495.

The protein belongs to the chaperonin (HSP60) family. As to quaternary structure, forms a cylinder of 14 subunits composed of two heptameric rings stacked back-to-back. Interacts with the co-chaperonin GroES.

It localises to the cytoplasm. It carries out the reaction ATP + H2O + a folded polypeptide = ADP + phosphate + an unfolded polypeptide.. Functionally, together with its co-chaperonin GroES, plays an essential role in assisting protein folding. The GroEL-GroES system forms a nano-cage that allows encapsulation of the non-native substrate proteins and provides a physical environment optimized to promote and accelerate protein folding. The polypeptide is Chaperonin GroEL (Pseudomonas entomophila (strain L48)).